The chain runs to 1381 residues: DNA-directed RNA polymerase subunit beta' (1381 aa).

Zn(2+) is bound by residues Cys-70, Cys-72, Cys-85, and Cys-88. Mg(2+)-binding residues include Asp-461, Asp-463, and Asp-465. 4 residues coordinate Zn(2+): Cys-801, Cys-875, Cys-882, and Cys-885. The tract at residues 1362 to 1381 (VEIEGDENSNKKSLDMHAAN) is disordered. The segment covering 1369–1381 (NSNKKSLDMHAAN) has biased composition (basic and acidic residues).

This sequence belongs to the RNA polymerase beta' chain family. As to quaternary structure, the RNAP catalytic core consists of 2 alpha, 1 beta, 1 beta' and 1 omega subunit. When a sigma factor is associated with the core the holoenzyme is formed, which can initiate transcription. The cofactor is Mg(2+). Requires Zn(2+) as cofactor.

It carries out the reaction RNA(n) + a ribonucleoside 5'-triphosphate = RNA(n+1) + diphosphate. DNA-dependent RNA polymerase catalyzes the transcription of DNA into RNA using the four ribonucleoside triphosphates as substrates. The sequence is that of DNA-directed RNA polymerase subunit beta' from Syntrophus aciditrophicus (strain SB).